We begin with the raw amino-acid sequence, 208 residues long: MTRVKICGLMDEYELECALKAGADALGFVVEIERSRHRLSLDEARNLIGMVPPFTTSVAVVEPAGVDDAVRLADYLQSDALQIHGDLSPEEIEEIKRRVPQRIIVAVPPGSDRAVEVSRIADAVLVDTPVSGGLGGSGRTHDWSVTARMRSTLHAPLILAGGLRPENVMDAINVVKPYAVDVSSGVETNGRKDPVKAEEFVRRVRSCQ.

Belongs to the TrpF family.

The enzyme catalyses N-(5-phospho-beta-D-ribosyl)anthranilate = 1-(2-carboxyphenylamino)-1-deoxy-D-ribulose 5-phosphate. The protein operates within amino-acid biosynthesis; L-tryptophan biosynthesis; L-tryptophan from chorismate: step 3/5. The chain is N-(5'-phosphoribosyl)anthranilate isomerase from Methanothrix thermoacetophila (strain DSM 6194 / JCM 14653 / NBRC 101360 / PT) (Methanosaeta thermophila).